Here is a 919-residue protein sequence, read N- to C-terminus: Aminodeoxychorismate synthase, chloroplastic (919 aa).

The transit peptide at 1-45 (MNMNFSFCSTSSELSYPSENVLRFSVASRLFSPKWKKSFISLPCR) directs the protein to the chloroplast. One can recognise a Glutamine amidotransferase type-1 domain in the interval 86–342 (RTLLIDNYDS…KDITVNYWSR (257 aa)). The active-site Nucleophile is the cysteine 172. Residues histidine 316 and glutamate 318 contribute to the active site. A PABB component region spans residues 436–910 (IFMELFGKNR…KTRAPANAVM (475 aa)).

The protein in the C-terminal section; belongs to the anthranilate synthase component I family.

It localises to the plastid. The protein localises to the chloroplast. The catalysed reaction is chorismate + L-glutamine = 4-amino-4-deoxychorismate + L-glutamate. It participates in cofactor biosynthesis; tetrahydrofolate biosynthesis; 4-aminobenzoate from chorismate: step 1/2. Its activity is regulated as follows. Activated by chorismate and inhibited by dihydrofolate and methotrexate. In terms of biological role, bifunctional enzyme that catalyzes the biosynthesis of 4-amino-4-deoxychorismate (ADC) from chorismate and glutamine. In the first step, a glutamine amidotransferase generates ammonia that is channelled between the binding sites of glutamine and chorismate and used along with chorismate in the second step, catalyzed by aminodeoxychorismate synthase, to produce ADC. Required for the synthesis of 4-aminobenzoate (PABA), an important component in tetrahydrofolate biosynthesis. Does not possess ADC lyase activity. In Arabidopsis thaliana (Mouse-ear cress), this protein is Aminodeoxychorismate synthase, chloroplastic (ADCS).